The chain runs to 211 residues: tRNA (guanine-N(7)-)-methyltransferase (211 aa).

The S-adenosyl-L-methionine site is built by E43, E68, N95, and D117. D117 is an active-site residue. Substrate-binding positions include K121, D153, and 190–193; that span reads TEYE.

It belongs to the class I-like SAM-binding methyltransferase superfamily. TrmB family.

It carries out the reaction guanosine(46) in tRNA + S-adenosyl-L-methionine = N(7)-methylguanosine(46) in tRNA + S-adenosyl-L-homocysteine. Its pathway is tRNA modification; N(7)-methylguanine-tRNA biosynthesis. Its function is as follows. Catalyzes the formation of N(7)-methylguanine at position 46 (m7G46) in tRNA. This is tRNA (guanine-N(7)-)-methyltransferase from Alkaliphilus oremlandii (strain OhILAs) (Clostridium oremlandii (strain OhILAs)).